Reading from the N-terminus, the 149-residue chain is Nucleoside diphosphate kinase (149 aa).

ATP-binding residues include Lys-9, Phe-57, Arg-85, Thr-91, Arg-102, and Asn-112. His-115 acts as the Pros-phosphohistidine intermediate in catalysis.

It belongs to the NDK family. As to quaternary structure, homotetramer. It depends on Mg(2+) as a cofactor.

The protein resides in the cytoplasm. The enzyme catalyses dZDP + ATP = dZTP + ADP. It catalyses the reaction a 2'-deoxyribonucleoside 5'-diphosphate + ATP = a 2'-deoxyribonucleoside 5'-triphosphate + ADP. The catalysed reaction is a ribonucleoside 5'-diphosphate + ATP = a ribonucleoside 5'-triphosphate + ADP. It participates in purine metabolism. Major role in the synthesis of nucleoside triphosphates other than ATP. The ATP gamma phosphate is transferred to the NDP beta phosphate via a ping-pong mechanism, using a phosphorylated active-site intermediate. Functionally, (Microbial infection) Catalyzes the phosphorylation of dZDP to dZTP, when the bacterium is infected by a phage that produces the substrate for the synthesis of dZTP (2- amino-2'-deoxyadenosine 5'-triphosphate), which is then used by the phage as a DNA polymerase substrate. The sequence is that of Nucleoside diphosphate kinase from Picosynechococcus sp. (strain ATCC 27264 / PCC 7002 / PR-6) (Agmenellum quadruplicatum).